Here is an 840-residue protein sequence, read N- to C-terminus: Intracellular phospholipase A1 (840 aa).

2 disordered regions span residues 1 to 142 and 666 to 718; these read MSGS…RRRK and KKNK…AANA. The span at 26–39 shows a compositional bias: basic and acidic residues; it reads GKVKQKEKPKEKQM. The span at 97 to 111 shows a compositional bias: low complexity; it reads SRPSGLPSNGNPGSS. Positions 564–827 constitute a DDHD domain; sequence LEFKVKYLFA…ALFLANVLYC (264 aa). Basic and acidic residues predominate over residues 668–680; sequence NKDDKTADARSGG. Residues 681 to 694 are compositionally biased toward acidic residues; sequence DDENEDEDECDSDE.

Belongs to the PA-PLA1 family.

The enzyme catalyses 1,2-dihexadecanoyl-sn-glycero-3-phospho-(1D-myo-inositol) + H2O = 2-hexadecanoyl-sn-glycero-3-phospho-(1D-myo-inositol) + hexadecanoate + H(+). It carries out the reaction a 1,2-diacyl-sn-glycero-3-phospho-L-serine + H2O = a 2-acyl-sn-glycero-3-phospho-L-serine + a fatty acid + H(+). It catalyses the reaction 1-hexadecanoyl-2-(9Z-octadecenoyl)-sn-glycero-3-phospho-L-serine + H2O = 2-(9Z-octadecenoyl)-sn-glycero-3-phospho-L-serine + hexadecanoate + H(+). The catalysed reaction is 1,2-di-(9Z-octadecenoyl)-sn-glycero-3-phosphocholine + H2O = (9Z-octadecenoyl)-sn-glycero-3-phosphocholine + (9Z)-octadecenoate + H(+). The enzyme catalyses a 1,2-diacyl-sn-glycero-3-phosphocholine + H2O = a 1-acyl-sn-glycero-3-phosphocholine + a fatty acid + H(+). It carries out the reaction 1,2-dihexadecanoyl-sn-glycero-3-phosphocholine + H2O = 1-hexadecanoyl-sn-glycero-3-phosphocholine + hexadecanoate + H(+). Its activity is regulated as follows. Inhibited by E-6-bromomethylene-3-1-naphthalenyl-2H-tetrahydropyran-2-one (BEL) in vitro. Hydrolyzes the ester bond at the sn-1 position of glycerophospholipids and produces 2-acyl lysophospholipids, being phosphatidylinositol (PI) its major substrate. PI is a versatile lipid that not only serves as a structural component of cellular membranes, but also plays important roles in signal transduction through distinct phosphorylated derivatives of the inositol head group. Catalyzes the hydrolysis of phosphatidylcholine at sn-2 position in vitro. Regulates asymmetric division, an important property of stem cells in C.elegans, by controlling the subcellular localizations of beta-catenin. The polypeptide is Intracellular phospholipase A1 (Caenorhabditis elegans).